A 634-amino-acid polypeptide reads, in one-letter code: Nicotinic receptor-associated protein 1 (634 aa).

C2 domains lie at 1 to 141 and 159 to 295; these read MNQP…KAHL and KTGS…EILL. Positions 29, 30, 36, 105, 107, 119, 189, 195, 251, 253, and 271 each coordinate Ca(2+). The region spanning 338–557 is the VWFA domain; that stretch reads DFAVAVDFTA…LDPDVIQENL (220 aa). The tract at residues 576–603 is disordered; that stretch reads RGFQPRPVDDPWRRDSPPPEFDPILDGT. Residues 582–592 show a composition bias toward basic and acidic residues; that stretch reads PVDDPWRRDSP.

This sequence belongs to the copine family. As to quaternary structure, interacts with nicotinic acetylcholine receptor. Requires Ca(2+) as cofactor. As to expression, expressed in head and tail neurons, ventral cord moto-neurons, body wall muscles and hypodermal cells of the vulva.

The protein resides in the cell membrane. Its function is as follows. Exhibits calcium-dependent phospholipid binding properties. May function in membrane trafficking. Regulates synaptic levels of nicotinic acetylcholine receptor subunit lev-1 and unc-38 in the nerve cord. Involved in nicotinic acetylcholine receptor (nAChR)-mediated sensitivity to nicotine and levamisole. Affects directional sperm motility. This Caenorhabditis elegans protein is Nicotinic receptor-associated protein 1 (nra-1).